The following is a 431-amino-acid chain: Glycerol-3-phosphate dehydrogenase [NAD(P)+] (431 aa).

Ser79, Phe80, Arg100, and Lys173 together coordinate NADPH. Positions 173 and 201 each coordinate sn-glycerol 3-phosphate. Position 205 (Ala205) interacts with NADPH. Sn-glycerol 3-phosphate contacts are provided by Lys256, Asp309, Ser319, Arg320, and Asn321. Lys256 functions as the Proton acceptor in the catalytic mechanism. Arg320 is an NADPH binding site. Glu346 contacts NADPH.

The protein belongs to the NAD-dependent glycerol-3-phosphate dehydrogenase family.

Its subcellular location is the cytoplasm. The catalysed reaction is sn-glycerol 3-phosphate + NAD(+) = dihydroxyacetone phosphate + NADH + H(+). The enzyme catalyses sn-glycerol 3-phosphate + NADP(+) = dihydroxyacetone phosphate + NADPH + H(+). It functions in the pathway membrane lipid metabolism; glycerophospholipid metabolism. Functionally, catalyzes the reduction of the glycolytic intermediate dihydroxyacetone phosphate (DHAP) to sn-glycerol 3-phosphate (G3P), the key precursor for phospholipid synthesis. The chain is Glycerol-3-phosphate dehydrogenase [NAD(P)+] from Psychrobacter cryohalolentis (strain ATCC BAA-1226 / DSM 17306 / VKM B-2378 / K5).